Here is a 484-residue protein sequence, read N- to C-terminus: CUGBP Elav-like family member 2 (484 aa).

Necessary for nuclear export regions lie at residues 1–89 (MNGA…PGMH) and 90–178 (HPIQ…EGCS). RRM domains lie at 16 to 99 (IKTF…PADS), 108 to 188 (RKLF…FADT), and 399 to 477 (ANLF…LKRS). The tract at residues 188 to 240 (TQKDKEQRRLQQQLAQQMQQLNTATWGNLTGLGGLTPQYLALLQQATSSSNLG) is necessary for splicing activity. Positions 347-399 (GLTNGTAGTMDALTQAYSGIQQYAAAALPTLYSQSLLQQQSAAGSQKEGPEGA) are necessary for nuclear localization. The interval 426 to 484 (ISAKVFIDKQTNLSKCFGFVSYDNPVSAQAAIQAMNGFQIGMKRLKVQLKRSKNDSKPY) is necessary for nuclear localization and splicing activity.

The protein belongs to the CELF/BRUNOL family. As to expression, expressed in heart.

Its subcellular location is the nucleus. It localises to the cytoplasm. Its function is as follows. RNA-binding protein implicated in the regulation of several post-transcriptional events. May be involved in mRNA translation repression and stability. Mediates exon inclusion in TNNT2 pre-mRNA. This chain is CUGBP Elav-like family member 2 (CELF2), found in Gallus gallus (Chicken).